A 340-amino-acid polypeptide reads, in one-letter code: Ketol-acid reductoisomerase (NADP(+)) (340 aa).

The KARI N-terminal Rossmann domain occupies 3 to 182 (VQMEYEKDVK…GAARVGLLET (180 aa)). Residues 26 to 29 (YGSQ), Arg49, Ser53, and 83 to 86 (DEIQ) contribute to the NADP(+) site. His108 is a catalytic residue. Gly134 is a binding site for NADP(+). The KARI C-terminal knotted domain occupies 183–328 (TYKEETEEDL…AELRKAMPFV (146 aa)). Residues Asp191, Glu195, Glu227, and Glu231 each contribute to the Mg(2+) site. Residue Ser252 participates in substrate binding.

Belongs to the ketol-acid reductoisomerase family. Mg(2+) serves as cofactor.

It catalyses the reaction (2R)-2,3-dihydroxy-3-methylbutanoate + NADP(+) = (2S)-2-acetolactate + NADPH + H(+). It carries out the reaction (2R,3R)-2,3-dihydroxy-3-methylpentanoate + NADP(+) = (S)-2-ethyl-2-hydroxy-3-oxobutanoate + NADPH + H(+). The protein operates within amino-acid biosynthesis; L-isoleucine biosynthesis; L-isoleucine from 2-oxobutanoate: step 2/4. Its pathway is amino-acid biosynthesis; L-valine biosynthesis; L-valine from pyruvate: step 2/4. Its function is as follows. Involved in the biosynthesis of branched-chain amino acids (BCAA). Catalyzes an alkyl-migration followed by a ketol-acid reduction of (S)-2-acetolactate (S2AL) to yield (R)-2,3-dihydroxy-isovalerate. In the isomerase reaction, S2AL is rearranged via a Mg-dependent methyl migration to produce 3-hydroxy-3-methyl-2-ketobutyrate (HMKB). In the reductase reaction, this 2-ketoacid undergoes a metal-dependent reduction by NADPH to yield (R)-2,3-dihydroxy-isovalerate. The polypeptide is Ketol-acid reductoisomerase (NADP(+)) (Streptococcus thermophilus (strain ATCC BAA-491 / LMD-9)).